The chain runs to 689 residues: tRNA 5-methylaminomethyl-2-thiouridine biosynthesis bifunctional protein MnmC (689 aa).

The segment at 1-245 is tRNA (mnm(5)s(2)U34)-methyltransferase; sequence MNQRPIQTAT…KREMLTGTLP (245 aa). The segment at 270–689 is FAD-dependent cmnm(5)s(2)U34 oxidoreductase; the sequence is IGGGIVSALT…RSPATQESSR (420 aa).

In the N-terminal section; belongs to the methyltransferase superfamily. tRNA (mnm(5)s(2)U34)-methyltransferase family. The protein in the C-terminal section; belongs to the DAO family. It depends on FAD as a cofactor.

It is found in the cytoplasm. The enzyme catalyses 5-aminomethyl-2-thiouridine(34) in tRNA + S-adenosyl-L-methionine = 5-methylaminomethyl-2-thiouridine(34) in tRNA + S-adenosyl-L-homocysteine + H(+). Catalyzes the last two steps in the biosynthesis of 5-methylaminomethyl-2-thiouridine (mnm(5)s(2)U) at the wobble position (U34) in tRNA. Catalyzes the FAD-dependent demodification of cmnm(5)s(2)U34 to nm(5)s(2)U34, followed by the transfer of a methyl group from S-adenosyl-L-methionine to nm(5)s(2)U34, to form mnm(5)s(2)U34. In Yersinia pestis, this protein is tRNA 5-methylaminomethyl-2-thiouridine biosynthesis bifunctional protein MnmC.